The sequence spans 530 residues: Membrane protein insertase YidC (530 aa).

A run of 4 helical transmembrane segments spans residues Val-5–Pro-25, Tyr-348–His-368, Leu-418–Ile-438, and Pro-492–Ile-512.

This sequence belongs to the OXA1/ALB3/YidC family. Type 1 subfamily. As to quaternary structure, interacts with the Sec translocase complex via SecD. Specifically interacts with transmembrane segments of nascent integral membrane proteins during membrane integration.

The protein resides in the cell inner membrane. Its function is as follows. Required for the insertion and/or proper folding and/or complex formation of integral membrane proteins into the membrane. Involved in integration of membrane proteins that insert both dependently and independently of the Sec translocase complex, as well as at least some lipoproteins. Aids folding of multispanning membrane proteins. The polypeptide is Membrane protein insertase YidC (Geotalea daltonii (strain DSM 22248 / JCM 15807 / FRC-32) (Geobacter daltonii)).